A 270-amino-acid chain; its full sequence is Type III pantothenate kinase (270 aa).

An ATP-binding site is contributed by 11-18 (DAGNSRIK). Residues Y96 and 103-106 (GSDR) each bind substrate. Residue D105 is the Proton acceptor of the active site. T129 provides a ligand contact to ATP. Residue T195 participates in substrate binding.

It belongs to the type III pantothenate kinase family. In terms of assembly, homodimer. Requires NH4(+) as cofactor. It depends on K(+) as a cofactor.

It is found in the cytoplasm. The enzyme catalyses (R)-pantothenate + ATP = (R)-4'-phosphopantothenate + ADP + H(+). The protein operates within cofactor biosynthesis; coenzyme A biosynthesis; CoA from (R)-pantothenate: step 1/5. Catalyzes the phosphorylation of pantothenate (Pan), the first step in CoA biosynthesis. This Paraburkholderia phytofirmans (strain DSM 17436 / LMG 22146 / PsJN) (Burkholderia phytofirmans) protein is Type III pantothenate kinase.